The sequence spans 31 residues: Cycloviolacin-O14 (31 aa).

Residues 1 to 31 (GSIPACGESCFKGKCYTPGCSCSKYPLCAKN) constitute a cross-link (cyclopeptide (Gly-Asn)). Cystine bridges form between C6/C20, C10/C22, and C15/C28.

In terms of processing, this is a cyclic peptide. In terms of tissue distribution, expressed in leaves and petioles but not in petals, roots and runners (at protein level).

In terms of biological role, probably participates in a plant defense mechanism. Has hemolytic activity. This is Cycloviolacin-O14 from Viola odorata (Sweet violet).